A 247-amino-acid polypeptide reads, in one-letter code: uncharacterized protein (247 aa).

The first 35 residues, 1 to 35 (MWGPGVTAEGLSVAPAPPPLLPLLLLLALALVAPS), serve as a signal peptide directing secretion. A glycan (N-linked (GlcNAc...) asparagine) is linked at Asn-57. Residues 82 to 102 (LSGLLILLVLFAIGYFLQRII) traverse the membrane as a helical segment. The tract at residues 109 to 179 (YPRGQARPGQ…GGRSDPSCAS (71 aa)) is disordered. Residues 160–172 (SGGGGRGRGGGGR) show a composition bias toward gly residues.

Its subcellular location is the membrane. This is an uncharacterized protein from Homo sapiens (Human).